Here is a 566-residue protein sequence, read N- to C-terminus: Arginine--tRNA ligase (566 aa).

Positions 120-130 match the 'HIGH' region motif; the sequence is PNIAKPFHVGH.

It belongs to the class-I aminoacyl-tRNA synthetase family. In terms of assembly, monomer.

Its subcellular location is the cytoplasm. The enzyme catalyses tRNA(Arg) + L-arginine + ATP = L-arginyl-tRNA(Arg) + AMP + diphosphate. This chain is Arginine--tRNA ligase, found in Clostridium kluyveri (strain NBRC 12016).